Here is a 514-residue protein sequence, read N- to C-terminus: 5'-AMP-activated protein kinase subunit gamma-3 (514 aa).

2 disordered regions span residues 1–121 (MELA…FPKA) and 134–155 (DNPP…SDSN). A compositionally biased stretch (polar residues) spans 59-71 (SRSWPSRAVTTSS). 3 consecutive CBS domains span residues 222-283 (MATS…RSPL), 305-363 (CFKP…GTLL), and 380-440 (TFRD…HLDM). Residues Arg-250, 265-270 (MLTITD), Val-310, 331-332 (HR), and Lys-350 contribute to the ADP site. Residues Arg-250, 265-270 (MLTITD), Val-310, His-331, 331-332 (HR), Lys-350, Thr-380, Ala-385, 406-407 (SA), 422-425 (SRFD), Arg-449, Leu-457, His-478, 478-479 (HR), and 494-497 (SLSD) each bind AMP. Residues Arg-250, 265–270 (MLTITD), Val-310, 331–332 (HR), Arg-332, and Lys-350 contribute to the ATP site. An AMPK pseudosubstrate motif is present at residues 318–339 (LFEAVYALIKNRIHRLPVLDPV). Residues 422–425 (SRFD), Arg-449, Leu-457, and 478–479 (HR) each bind ADP. ATP-binding positions include 422–425 (SRFD), Arg-449, Leu-457, and 478–479 (HR). Positions 452 to 511 (CLEGVLSCQPHETLGEVIDRIVREQVHRLVLVDETQHLLGVVSLSDILQALVLSPAGIDA) constitute a CBS 4 domain.

Belongs to the 5'-AMP-activated protein kinase gamma subunit family. As to quaternary structure, AMPK is a heterotrimer of an alpha catalytic subunit (PRKAA1 or PRKAA2), a beta (PRKAB1 or PRKAB2) and a gamma non-catalytic subunits (PRKAG1, PRKAG2 or PRKAG3). Interacts with FNIP1 and FNIP2. Post-translationally, phosphorylated by ULK1; leading to negatively regulate AMPK activity and suggesting the existence of a regulatory feedback loop between ULK1 and AMPK. In terms of processing, glycosylated; O-GlcNAcylated by OGT, promoting the AMP-activated protein kinase (AMPK) activity. As to expression, muscle.

AMP/ATP-binding subunit of AMP-activated protein kinase (AMPK), an energy sensor protein kinase that plays a key role in regulating cellular energy metabolism. In response to reduction of intracellular ATP levels, AMPK activates energy-producing pathways and inhibits energy-consuming processes: inhibits protein, carbohydrate and lipid biosynthesis, as well as cell growth and proliferation. AMPK acts via direct phosphorylation of metabolic enzymes, and by longer-term effects via phosphorylation of transcription regulators. AMPK also acts as a regulator of cellular polarity by remodeling the actin cytoskeleton; probably by indirectly activating myosin. The AMPK gamma3 subunit is a non-catalytic subunit with a regulatory role in muscle energy metabolism. It mediates binding to AMP, ADP and ATP, leading to AMPK activation or inhibition: AMP-binding results in allosteric activation of alpha catalytic subunit (PRKAA1 or PRKAA2) both by inducing phosphorylation and preventing dephosphorylation of catalytic subunits. ADP also stimulates phosphorylation, without stimulating already phosphorylated catalytic subunit. ATP promotes dephosphorylation of catalytic subunit, rendering the AMPK enzyme inactive. In Sus scrofa (Pig), this protein is 5'-AMP-activated protein kinase subunit gamma-3 (PRKAG3).